The chain runs to 647 residues: Threonine--tRNA ligase (647 aa).

The 61-residue stretch at 1–61 (MINITFPDGA…TEDGSIEIVT (61 aa)) folds into the TGS domain. The segment at 242 to 540 (DHRKLGKELD…LIENYKGAFP (299 aa)) is catalytic. Positions 336, 387, and 517 each coordinate Zn(2+).

This sequence belongs to the class-II aminoacyl-tRNA synthetase family. In terms of assembly, homodimer. Zn(2+) serves as cofactor.

It is found in the cytoplasm. The enzyme catalyses tRNA(Thr) + L-threonine + ATP = L-threonyl-tRNA(Thr) + AMP + diphosphate + H(+). In terms of biological role, catalyzes the attachment of threonine to tRNA(Thr) in a two-step reaction: L-threonine is first activated by ATP to form Thr-AMP and then transferred to the acceptor end of tRNA(Thr). Also edits incorrectly charged L-seryl-tRNA(Thr). The polypeptide is Threonine--tRNA ligase (Streptococcus pneumoniae (strain 70585)).